The following is a 397-amino-acid chain: Lysophospholipid transporter LplT (397 aa).

Topologically, residues 1–17 (MSESVHTNTSLWSKGMK) are periplasmic. The chain crosses the membrane as a helical span at residues 18–38 (AVIVAQFLSAFGDNALLFATL). Residues 39–52 (ALLKAQFYPEWSQP) lie on the Cytoplasmic side of the membrane. A helical transmembrane segment spans residues 53–73 (ILQMVFVGAYILFAPFVGQVA). Over 74 to 90 (DSFAKGRVMMFANGLKL) the chain is Periplasmic. Residues 91-111 (LGAASICFGINPFLGYTLVGV) form a helical membrane-spanning segment. The Cytoplasmic portion of the chain corresponds to 112-144 (GAAAYSPAKYGILGELTTGSKLVKANGLMEAST). A helical transmembrane segment spans residues 145–165 (IAAILLGSVAGGVLADWHVLV). Residue A166 is a topological domain, periplasmic. Residues 167–187 (LAACALAYGGAVVANIYIPKL) traverse the membrane as a helical segment. Residues 188 to 226 (AAARPGQSWNLINMTRSFLNACTSLWRNGETRFSLVGTS) lie on the Cytoplasmic side of the membrane. The helical transmembrane segment at 227–247 (LFWGAGVTLRFLLVLWVPVAL) threads the bilayer. Topologically, residues 248-256 (GITDNATPT) are periplasmic. Residues 257–277 (YLNAMVAIGIVVGAGAAAKLV) form a helical membrane-spanning segment. The Cytoplasmic segment spans residues 278–280 (TLE). The helical transmembrane segment at 281-301 (TVSRCMPAGILIGVVVLIFSL) threads the bilayer. The Periplasmic segment spans residues 302 to 304 (QHE). A helical membrane pass occupies residues 305–325 (LLPAYALLMLIGVMGGFFVVP). At 326–343 (LNALLQERGKKSVGAGNA) the chain is on the cytoplasmic side. Residues 344 to 364 (IAVQNLGENSAMLLMLGIYSL) form a helical membrane-spanning segment. At 365 to 366 (AV) the chain is on the periplasmic side. Residues 367 to 387 (MVGIPVVPIGIGFGALFALAI) traverse the membrane as a helical segment. The Cytoplasmic segment spans residues 388–397 (TALWIWQRRH).

It belongs to the major facilitator superfamily. LplT (TC 2.A.1.42) family.

It localises to the cell inner membrane. In terms of biological role, catalyzes the facilitated diffusion of 2-acyl-glycero-3-phosphoethanolamine (2-acyl-GPE) into the cell. The chain is Lysophospholipid transporter LplT from Escherichia coli (strain ATCC 8739 / DSM 1576 / NBRC 3972 / NCIMB 8545 / WDCM 00012 / Crooks).